The chain runs to 103 residues: MATYAIVKTGGKQYKVAVGDLVKVEKIEGEPGTAVSLAPVLVVDGSDLTTDAAKLAKVAVTSEIVEHTKGPKIRIHKFKNKTGYHKRQGHRQPITVLKVTGIK.

Belongs to the bacterial ribosomal protein bL21 family. In terms of assembly, part of the 50S ribosomal subunit. Contacts protein L20.

Its function is as follows. This protein binds to 23S rRNA in the presence of protein L20. The sequence is that of Large ribosomal subunit protein bL21 from Rhodococcus erythropolis (strain PR4 / NBRC 100887).